The sequence spans 419 residues: Esterase FrsA (419 aa).

This sequence belongs to the FrsA family.

The enzyme catalyses a carboxylic ester + H2O = an alcohol + a carboxylate + H(+). Its function is as follows. Catalyzes the hydrolysis of esters. This Photobacterium profundum (strain SS9) protein is Esterase FrsA.